A 641-amino-acid chain; its full sequence is Sodium-dependent nutrient amino acid transporter 1 (641 aa).

Residues 1-38 (MELKGVQPSNGSSNGSGNGATNAASTEKTDAEKPTAER) are disordered. Topologically, residues 1 to 40 (MELKGVQPSNGSSNGSGNGATNAASTEKTDAEKPTAERTN) are cytoplasmic. A compositionally biased stretch (low complexity) spans 9–26 (SNGSSNGSGNGATNAAST). Positions 27–36 (EKTDAEKPTA) are enriched in basic and acidic residues. Helical transmembrane passes span 41–61 (WGNGLEFLMSCISVSVGLGNV), 74–94 (GAFLIPYIIVLFLIGKPMYYL), and 111–131 (SVVPGFVGVGYGQAFGTICII). N-linked (GlcNAc...) asparagine glycosylation is found at Asn185 and Asn190. A run of 9 helical transmembrane segments spans residues 229–249 (PDWKLTLALFVAWVVIFLVIM), 258–278 (AAYFLALFPYVVLFVLLIRAV), 307–327 (AVVQCFFSLAVGSGPIIMFAS), 341–361 (IVTTLDTLTSLLGGITIFAIL), 401–421 (LFSVLFFFMLFVLGIGSIVAL), 447–467 (VCGFLMGLVYVTPGGQWILTL), 474–494 (TYVVFILAIFELAGIVWVYGL), 516–536 (CWSFFTPVMMIIIFIYSMVTI), and 552–572 (IAGWLLFAIGAAQFPLWGLWY).

The protein belongs to the sodium:neurotransmitter symporter (SNF) (TC 2.A.22) family. In terms of tissue distribution, in larvae, weak specific expression in the anterior midgut just proximal to the gastric caeca reproductive rudiments, common ureters of the Malpighian tubules, and distal swollen portion of the anterior pair of Malpighian tubules. Expression is also seen in the imaginal disks of the head; brain hemispheres and the ventral ganglion. Stronger expression in the posterior midgut.

Its subcellular location is the membrane. Functionally, unusual broad substrate spectrum amino acid:sodium cotransporter that promotes absorption of the D isomers of essential amino acids. Neutral amino acids are the preferred substrates, especially methionine and phenylalanine. The sequence is that of Sodium-dependent nutrient amino acid transporter 1 (NAAT1) from Drosophila melanogaster (Fruit fly).